The following is a 153-amino-acid chain: Ribonuclease H (153 aa).

An RNase H type-1 domain is found at M1–D142. Residues D10, E48, D70, and D134 each coordinate Mg(2+).

It belongs to the RNase H family. Monomer. It depends on Mg(2+) as a cofactor.

It is found in the cytoplasm. The enzyme catalyses Endonucleolytic cleavage to 5'-phosphomonoester.. Its function is as follows. Endonuclease that specifically degrades the RNA of RNA-DNA hybrids. This chain is Ribonuclease H, found in Aromatoleum aromaticum (strain DSM 19018 / LMG 30748 / EbN1) (Azoarcus sp. (strain EbN1)).